Consider the following 793-residue polypeptide: Phosphoribosylformylglycinamidine synthase subunit PurL (793 aa).

His53 is a catalytic residue. 2 residues coordinate ATP: Tyr56 and Lys95. Glu97 serves as a coordination point for Mg(2+). Substrate-binding positions include 98–101 and Arg120; that span reads SHNH. Catalysis depends on His99, which acts as the Proton acceptor. Asp121 lines the Mg(2+) pocket. Position 244 (Gln244) interacts with substrate. Asp272 serves as a coordination point for Mg(2+). 316–318 contributes to the substrate binding site; the sequence is ESQ. The ATP site is built by Asp523 and Gly560. Residue Asn561 coordinates Mg(2+). Ser563 contributes to the substrate binding site.

It belongs to the FGAMS family. In terms of assembly, monomer. Part of the FGAM synthase complex composed of 1 PurL, 1 PurQ and 2 PurS subunits.

The protein localises to the cytoplasm. The enzyme catalyses N(2)-formyl-N(1)-(5-phospho-beta-D-ribosyl)glycinamide + L-glutamine + ATP + H2O = 2-formamido-N(1)-(5-O-phospho-beta-D-ribosyl)acetamidine + L-glutamate + ADP + phosphate + H(+). Its pathway is purine metabolism; IMP biosynthesis via de novo pathway; 5-amino-1-(5-phospho-D-ribosyl)imidazole from N(2)-formyl-N(1)-(5-phospho-D-ribosyl)glycinamide: step 1/2. Part of the phosphoribosylformylglycinamidine synthase complex involved in the purines biosynthetic pathway. Catalyzes the ATP-dependent conversion of formylglycinamide ribonucleotide (FGAR) and glutamine to yield formylglycinamidine ribonucleotide (FGAM) and glutamate. The FGAM synthase complex is composed of three subunits. PurQ produces an ammonia molecule by converting glutamine to glutamate. PurL transfers the ammonia molecule to FGAR to form FGAM in an ATP-dependent manner. PurS interacts with PurQ and PurL and is thought to assist in the transfer of the ammonia molecule from PurQ to PurL. This Prochlorococcus marinus (strain SARG / CCMP1375 / SS120) protein is Phosphoribosylformylglycinamidine synthase subunit PurL.